A 217-amino-acid chain; its full sequence is Histone H1-gamma, late (217 aa).

Disordered regions lie at residues 1 to 21 (MSAA…HPPS) and 80 to 217 (GKGA…PAKK). Residues 17-91 (AHPPSSQMVV…GASGSFKLGK (75 aa)) form the H15 domain. Positions 104–113 (IAAKKAKLAA) are enriched in basic residues. A compositionally biased stretch (basic and acidic residues) spans 114-123 (KKKEQREKKA). A compositionally biased stretch (basic residues) spans 124-217 (LKTKARKEKV…AKKAAKPAKK (94 aa)).

The protein belongs to the histone H1/H5 family.

The protein resides in the nucleus. It is found in the chromosome. Its function is as follows. Histones H1 are necessary for the condensation of nucleosome chains into higher-order structures. The protein is Histone H1-gamma, late of Strongylocentrotus purpuratus (Purple sea urchin).